Consider the following 568-residue polypeptide: Sulfite reductase [NADPH] hemoprotein beta-component (568 aa).

[4Fe-4S] cluster-binding residues include C425, C431, C470, and C474. C474 is a siroheme binding site.

Belongs to the nitrite and sulfite reductase 4Fe-4S domain family. In terms of assembly, alpha(8)-beta(8). The alpha component is a flavoprotein, the beta component is a hemoprotein. Siroheme serves as cofactor. It depends on [4Fe-4S] cluster as a cofactor.

It catalyses the reaction hydrogen sulfide + 3 NADP(+) + 3 H2O = sulfite + 3 NADPH + 4 H(+). Its pathway is sulfur metabolism; hydrogen sulfide biosynthesis; hydrogen sulfide from sulfite (NADPH route): step 1/1. Its function is as follows. Component of the sulfite reductase complex that catalyzes the 6-electron reduction of sulfite to sulfide. This is one of several activities required for the biosynthesis of L-cysteine from sulfate. The chain is Sulfite reductase [NADPH] hemoprotein beta-component from Xanthomonas oryzae pv. oryzae (strain MAFF 311018).